We begin with the raw amino-acid sequence, 395 residues long: Elongation factor Tu (395 aa).

The region spanning 10 to 204 (KPHLNIGTIG…AVDTWIELPE (195 aa)) is the tr-type G domain. A G1 region spans residues 19-26 (GHVDHGKT). 19–26 (GHVDHGKT) serves as a coordination point for GTP. Residue Thr-26 coordinates Mg(2+). Positions 60-64 (GITIN) are G2. A G3 region spans residues 81–84 (DCPG). Residues 81–85 (DCPGH) and 136–139 (NKVD) contribute to the GTP site. Residues 136-139 (NKVD) form a G4 region. The interval 174-176 (SAL) is G5.

This sequence belongs to the TRAFAC class translation factor GTPase superfamily. Classic translation factor GTPase family. EF-Tu/EF-1A subfamily. As to quaternary structure, monomer.

The protein resides in the cytoplasm. It catalyses the reaction GTP + H2O = GDP + phosphate + H(+). Its function is as follows. GTP hydrolase that promotes the GTP-dependent binding of aminoacyl-tRNA to the A-site of ribosomes during protein biosynthesis. In Christiangramia forsetii (strain DSM 17595 / CGMCC 1.15422 / KT0803) (Gramella forsetii), this protein is Elongation factor Tu.